Consider the following 640-residue polypeptide: Chaperone protein DnaK (640 aa).

The residue at position 198 (T198) is a Phosphothreonine; by autocatalysis. The interval 600 to 640 (KTQGAGAEGGEQPHGEQEAGGAAKGEKVVDADFEEVKDDKK) is disordered. The segment covering 630–640 (ADFEEVKDDKK) has biased composition (acidic residues).

This sequence belongs to the heat shock protein 70 family.

In terms of biological role, acts as a chaperone. This chain is Chaperone protein DnaK, found in Citrifermentans bemidjiense (strain ATCC BAA-1014 / DSM 16622 / JCM 12645 / Bem) (Geobacter bemidjiensis).